The following is a 181-amino-acid chain: Inner membrane-spanning protein YciB (181 aa).

The next 5 membrane-spanning stretches (helical) occupy residues 10–30, 50–70, 72–92, 118–138, and 148–168; these read LVIF…GALI, MHLI…VFHD, AFIK…LGVS, VTWY…YVAF, and FKVF…VFYL.

The protein belongs to the YciB family.

The protein resides in the cell inner membrane. Functionally, plays a role in cell envelope biogenesis, maintenance of cell envelope integrity and membrane homeostasis. This chain is Inner membrane-spanning protein YciB, found in Shewanella oneidensis (strain ATCC 700550 / JCM 31522 / CIP 106686 / LMG 19005 / NCIMB 14063 / MR-1).